We begin with the raw amino-acid sequence, 101 residues long: Small ribosomal subunit protein uS14 (101 aa).

Positions 33–69 are disordered; that stretch reads SQDASYEEKIDASTKLQKLPRDSSPSRHRNRCELSGR. Positions 51 to 68 are enriched in basic and acidic residues; sequence LPRDSSPSRHRNRCELSG.

It belongs to the universal ribosomal protein uS14 family. As to quaternary structure, part of the 30S ribosomal subunit. Contacts proteins S3 and S10.

Its function is as follows. Binds 16S rRNA, required for the assembly of 30S particles and may also be responsible for determining the conformation of the 16S rRNA at the A site. This chain is Small ribosomal subunit protein uS14, found in Xanthomonas axonopodis pv. citri (strain 306).